We begin with the raw amino-acid sequence, 162 residues long: UPF0114 protein PSPA7_5214 (162 aa).

The next 3 helical transmembrane spans lie at 15-35, 53-73, and 136-156; these read LLAP…IKFF, LILV…LVMV, and LMWY…MGYL.

It belongs to the UPF0114 family.

The protein resides in the cell membrane. In Pseudomonas paraeruginosa (strain DSM 24068 / PA7) (Pseudomonas aeruginosa (strain PA7)), this protein is UPF0114 protein PSPA7_5214.